The primary structure comprises 71 residues: Small ribosomal subunit protein bS21 (71 aa).

Residues 50–59 are compositionally biased toward basic residues; it reads AAAVKRHAKK. A disordered region spans residues 50-71; sequence AAAVKRHAKKVQREQRRAVRLY. Residues 60-71 show a composition bias toward basic and acidic residues; sequence VQREQRRAVRLY.

Belongs to the bacterial ribosomal protein bS21 family.

This chain is Small ribosomal subunit protein bS21, found in Pseudomonas entomophila (strain L48).